Reading from the N-terminus, the 157-residue chain is SsrA-binding protein (157 aa).

Residues 133–157 (LHDKRETEKKRDWSREKSRLLRARG) form a disordered region. The span at 135-151 (DKRETEKKRDWSREKSR) shows a compositional bias: basic and acidic residues.

It belongs to the SmpB family.

Its subcellular location is the cytoplasm. Required for rescue of stalled ribosomes mediated by trans-translation. Binds to transfer-messenger RNA (tmRNA), required for stable association of tmRNA with ribosomes. tmRNA and SmpB together mimic tRNA shape, replacing the anticodon stem-loop with SmpB. tmRNA is encoded by the ssrA gene; the 2 termini fold to resemble tRNA(Ala) and it encodes a 'tag peptide', a short internal open reading frame. During trans-translation Ala-aminoacylated tmRNA acts like a tRNA, entering the A-site of stalled ribosomes, displacing the stalled mRNA. The ribosome then switches to translate the ORF on the tmRNA; the nascent peptide is terminated with the 'tag peptide' encoded by the tmRNA and targeted for degradation. The ribosome is freed to recommence translation, which seems to be the essential function of trans-translation. The polypeptide is SsrA-binding protein (Afipia carboxidovorans (strain ATCC 49405 / DSM 1227 / KCTC 32145 / OM5) (Oligotropha carboxidovorans)).